The sequence spans 403 residues: Flavohemoprotein (403 aa).

One can recognise a Globin domain in the interval 1–138 (MLTPEQKAIV…LADLMIGIEK (138 aa)). A heme b-binding site is contributed by His-85. Catalysis depends on charge relay system residues Tyr-95 and Glu-137. A reductase region spans residues 149–403 (GGWRDFRPFR…SQSFAPVILG (255 aa)). The region spanning 152-257 (RDFRPFRVAR…HVPAGDFVLQ (106 aa)) is the FAD-binding FR-type domain. Residues Tyr-190 and 206 to 209 (RQYS) each bind FAD. Position 269–274 (269–274 (GVGITP)) interacts with NADP(+). 390–393 (TFGP) serves as a coordination point for FAD.

Belongs to the globin family. Two-domain flavohemoproteins subfamily. The protein in the C-terminal section; belongs to the flavoprotein pyridine nucleotide cytochrome reductase family. It depends on heme b as a cofactor. FAD serves as cofactor.

The enzyme catalyses 2 nitric oxide + NADPH + 2 O2 = 2 nitrate + NADP(+) + H(+). It catalyses the reaction 2 nitric oxide + NADH + 2 O2 = 2 nitrate + NAD(+) + H(+). This chain is Flavohemoprotein, found in Deinococcus radiodurans (strain ATCC 13939 / DSM 20539 / JCM 16871 / CCUG 27074 / LMG 4051 / NBRC 15346 / NCIMB 9279 / VKM B-1422 / R1).